The chain runs to 1242 residues: DNA-directed RNA polymerase RPB2 homolog (1242 aa).

The C4-type zinc-finger motif lies at 1180 to 1201; that stretch reads CRNCGEPAIYNASHPIYKCMNC.

This sequence belongs to the RNA polymerase beta chain family. As to quaternary structure, part of the viral DNA-directed RNA polymerase that consists of 8 polII-like subunits (RPB1, RPB2, RPB3, RPB5, RPB6, RPB7, RPB9, RPB10), a capping enzyme and a termination factor.

Its subcellular location is the host cytoplasm. It is found in the virion. It carries out the reaction RNA(n) + a ribonucleoside 5'-triphosphate = RNA(n+1) + diphosphate. In terms of biological role, catalytic component of the DNA-directed RNA polymerase (RNAP) that catalyzes the transcription in the cytoplasm of viral DNA into RNA using the four ribonucleoside triphosphates as substrates. Forms the polymerase active center together with RPB1. Part of the core element with the central large cleft, the clamp element that moves to open and close the cleft and the jaws that are thought to grab the incoming DNA template. The polypeptide is DNA-directed RNA polymerase RPB2 homolog (African swine fever virus (isolate Tick/Malawi/Lil 20-1/1983) (ASFV)).